We begin with the raw amino-acid sequence, 691 residues long: Solute carrier organic anion transporter family member 1B1 (691 aa).

Residues 1–28 (MDQNQHLNKTAEAQPSENKKTRYCNGLK) lie on the Cytoplasmic side of the membrane. The helical transmembrane segment at 29–48 (MFLAALSLSFIAKTLGAIIM) threads the bilayer. The Extracellular segment spans residues 49 to 67 (KSSIIHIERRFEISSSLVG). Residues 68 to 88 (FIDGSFEIGNLLVIVFVSYFG) form a helical membrane-spanning segment. Over 89-94 (SKLHRP) the chain is Cytoplasmic. A helical transmembrane segment spans residues 95–119 (KLIGIGCFIMGIGGVLTALPHFFMG). At 120-168 (YYRYSKETNINSSENSTSTLSTCLINQILSLNRASPEIVGKGCLKESGS) the chain is on the extracellular side. N130 and N134 each carry an N-linked (GlcNAc...) asparagine glycan. A helical membrane pass occupies residues 169–197 (YMWIYVFMGNMLRGIGETPIVPLGLSYID). Residues 198-216 (DFAKEGHSSLYLGILNAIA) are Cytoplasmic-facing. The chain crosses the membrane as a helical span at residues 217-237 (MIGPIIGFTLGSLFSKMYVDI). Over 238 to 255 (GYVDLSTIRITPTDSRWV) the chain is Extracellular. The chain crosses the membrane as a helical span at residues 256 to 280 (GAWWLNFLVSGLFSIISSIPFFFLP). The Cytoplasmic portion of the chain corresponds to 281 to 331 (QTPNKPQKERKASLSLHVLETNDEKDQTANLTNQGKNITKNVTGFFQSFKS). 2 positions are modified to phosphoserine: S293 and S295. A helical membrane pass occupies residues 332 to 353 (ILTNPLYVMFVLLTLLQVSSYI). The Extracellular segment spans residues 354–373 (GAFTYVFKYVEQQYGQPSSK). The helical transmembrane segment at 374–397 (ANILLGVITIPIFASGMFLGGYII) threads the bilayer. The Cytoplasmic segment spans residues 398–401 (KKFK). The chain crosses the membrane as a helical span at residues 402-425 (LNTVGIAKFSCFTAVMSLSFYLLY). Residues 426–537 (FFILCENKSV…DACTRKFYFF (112 aa)) are Extracellular-facing. N432 carries an N-linked (GlcNAc...) asparagine glycan. The Kazal-like domain maps to 453 to 508 (DVPLSYCNSDCNCDESQWEPVCGNNGITYISPCLAGCKSSSGNKKPIVFYNCSCLE). Intrachain disulfides connect C459/C489, C465/C485, and C474/C506. N503 and N516 each carry an N-linked (GlcNAc...) asparagine glycan. The chain crosses the membrane as a helical span at residues 538–560 (VAIQVLNLFFSALGGTSHVMLIV). Residues 561–569 (KIVQPELKS) are Cytoplasmic-facing. Residues 570 to 595 (LALGFHSMVIRALGGILAPIYFGALI) traverse the membrane as a helical segment. The Extracellular portion of the chain corresponds to 596-629 (DTTCIKWSTNNCGTRGSCRTYNSTSFSRVYLGLS). An N-linked (GlcNAc...) asparagine glycan is attached at N617. Residues 630–647 (SMLRVSSLVLYIILIYAM) traverse the membrane as a helical segment. Residues 648-691 (KKKYQEKDINASENGSVMDEANLESLNKNKHFVPSAGADSETHC) are Cytoplasmic-facing. S672 and S682 each carry phosphoserine.

The protein belongs to the organo anion transporter (TC 2.A.60) family. In terms of tissue distribution, highly expressed in liver, at the basolateral membranes of centrilobular hepatocytes. Expressed in liver (at protein level). Expressed in fetal liver. Not detected in heart, brain, placenta, lung, skeletal muscle, kidney, pancreas, spleen, thymus, prostate, testis, ovary, small intestine, colon and leukocyte. In testis, primarily localized to the basal membrane of Sertoli cells and weakly expressed in Leydig cells and within the tubules.

It is found in the basolateral cell membrane. It localises to the basal cell membrane. The enzyme catalyses taurocholate(out) = taurocholate(in). The catalysed reaction is dehydroepiandrosterone 3-sulfate(out) = dehydroepiandrosterone 3-sulfate(in). It carries out the reaction estrone 3-sulfate(out) = estrone 3-sulfate(in). It catalyses the reaction 3,3',5'-triiodo-L-thyronine(out) = 3,3',5'-triiodo-L-thyronine(in). The enzyme catalyses L-thyroxine(out) = L-thyroxine(in). The catalysed reaction is prostaglandin E2(out) = prostaglandin E2(in). It carries out the reaction thromboxane B2(out) = thromboxane B2(in). It catalyses the reaction 17beta-estradiol 17-O-(beta-D-glucuronate)(out) = 17beta-estradiol 17-O-(beta-D-glucuronate)(in). The enzyme catalyses leukotriene C4(out) = leukotriene C4(in). The catalysed reaction is leukotriene E4(out) = leukotriene E4(in). It carries out the reaction (4E,15E)-bilirubin IXalpha C8-beta-D-glucuronoside(out) = (4E,15E)-bilirubin IXalpha C8-beta-D-glucuronoside(in). It catalyses the reaction bilirubin IXalpha bis-beta-D-glucuronoside(out) = bilirubin IXalpha bis-beta-D-glucuronoside(in). Its function is as follows. Mediates the Na(+)-independent uptake of organic anions. Shows broad substrate specificity, can transport both organic anions such as bile acid taurocholate (cholyltaurine) and conjugated steroids (dehydroepiandrosterone 3-sulfate, 17-beta-glucuronosyl estradiol, and estrone 3-sulfate), as well as eicosanoids (prostaglandin E2, thromboxane B2, leukotriene C4, and leukotriene E4), and thyroid hormones (T4/L-thyroxine, and T3/3,3',5'-triiodo-L-thyronine). Can take up bilirubin glucuronides from plasma into the liver, contributing to the detoxification-enhancing liver-blood shuttling loop. Involved in the clearance of endogenous and exogenous substrates from the liver. Transports coproporphyrin I and III, by-products of heme synthesis, and may be involved in their hepatic disposition. May contribute to regulate the transport of organic compounds in testes across the blood-testis-barrier. Can transport HMG-CoA reductase inhibitors (also known as statins), such as pravastatin and pitavastatin, a clinically important class of hypolipidemic drugs. May play an important role in plasma and tissue distribution of the structurally diverse chemotherapeutic drug methotrexate. May also transport antihypertension agents, such as the angiotensin-converting enzyme (ACE) inhibitor prodrug enalapril, and the highly selective angiotensin II AT1-receptor antagonist valsartan, in the liver. Shows a pH-sensitive substrate specificity towards prostaglandin E2 and T4 which may be ascribed to the protonation state of the binding site and leads to a stimulation of substrate transport in an acidic microenvironment. Hydrogencarbonate/HCO3(-) acts as the probable counteranion that exchanges for organic anions. The chain is Solute carrier organic anion transporter family member 1B1 (SLCO1B1) from Homo sapiens (Human).